The chain runs to 372 residues: Dual-specificity RNA methyltransferase RlmN (372 aa).

Glu93 acts as the Proton acceptor in catalysis. The Radical SAM core domain occupies 99 to 338; the sequence is EKDRATLCIS…VTVRKTRGDD (240 aa). Cys106 and Cys343 form a disulfide bridge. Cys113, Cys117, and Cys120 together coordinate [4Fe-4S] cluster. S-adenosyl-L-methionine contacts are provided by residues 167–168, Ser199, 221–223, and Asn300; these read GE and SLH. Cys343 functions as the S-methylcysteine intermediate in the catalytic mechanism.

It belongs to the radical SAM superfamily. RlmN family. The cofactor is [4Fe-4S] cluster.

The protein resides in the cytoplasm. The catalysed reaction is adenosine(2503) in 23S rRNA + 2 reduced [2Fe-2S]-[ferredoxin] + 2 S-adenosyl-L-methionine = 2-methyladenosine(2503) in 23S rRNA + 5'-deoxyadenosine + L-methionine + 2 oxidized [2Fe-2S]-[ferredoxin] + S-adenosyl-L-homocysteine. It catalyses the reaction adenosine(37) in tRNA + 2 reduced [2Fe-2S]-[ferredoxin] + 2 S-adenosyl-L-methionine = 2-methyladenosine(37) in tRNA + 5'-deoxyadenosine + L-methionine + 2 oxidized [2Fe-2S]-[ferredoxin] + S-adenosyl-L-homocysteine. Specifically methylates position 2 of adenine 2503 in 23S rRNA and position 2 of adenine 37 in tRNAs. m2A2503 modification seems to play a crucial role in the proofreading step occurring at the peptidyl transferase center and thus would serve to optimize ribosomal fidelity. This chain is Dual-specificity RNA methyltransferase RlmN, found in Psychromonas ingrahamii (strain DSM 17664 / CCUG 51855 / 37).